Reading from the N-terminus, the 404-residue chain is Sialidase (404 aa).

The first 27 residues, 1–27 (MKKFIKILKVLSMAIVLSACNINGIFA), serve as a signal peptide directing secretion. Arg-55 contributes to the substrate binding site. Asp-80 serves as the catalytic Proton acceptor. 3 BNR repeats span residues 89-100 (AKSTDNGQTWDY), 158-169 (VYSDDNGETWSD), and 226-237 (IYSKDNGETWTM). A substrate-binding site is contributed by Arg-263. The stretch at 273–284 (YISYDMGSTWEV) is one BNR 4 repeat. Catalysis depends on Tyr-365, which acts as the Nucleophile.

It belongs to the glycosyl hydrolase 33 family. In terms of processing, it is possible that the sialidase is cleaved in front of a cysteine within the leader peptide, forming a glyceride thioether bond which links the protein to the membrane. A second proteolytic cleavage releases the mature extracellular protein.

Its subcellular location is the secreted. The enzyme catalyses Hydrolysis of alpha-(2-&gt;3)-, alpha-(2-&gt;6)-, alpha-(2-&gt;8)- glycosidic linkages of terminal sialic acid residues in oligosaccharides, glycoproteins, glycolipids, colominic acid and synthetic substrates.. Its function is as follows. Sialidases have been suggested to be pathogenic factors in microbial infections. This Paraclostridium sordellii (Clostridium sordellii) protein is Sialidase.